Here is a 307-residue protein sequence, read N- to C-terminus: Small ribosomal subunit biogenesis GTPase RsgA (307 aa).

A disordered region spans residues 1-21 (MPSEHPFSDGIPTPNPKETMN). A CP-type G domain is found at 85–242 (RQDAWKTKLI…LIDSPGLQEF (158 aa)). Residues 135–138 (NKAD) and 184–192 (GQSGMGKST) contribute to the GTP site. Zn(2+)-binding residues include cysteine 266, cysteine 271, histidine 273, and cysteine 279.

It belongs to the TRAFAC class YlqF/YawG GTPase family. RsgA subfamily. Monomer. Associates with 30S ribosomal subunit, binds 16S rRNA. It depends on Zn(2+) as a cofactor.

It is found in the cytoplasm. One of several proteins that assist in the late maturation steps of the functional core of the 30S ribosomal subunit. Helps release RbfA from mature subunits. May play a role in the assembly of ribosomal proteins into the subunit. Circularly permuted GTPase that catalyzes slow GTP hydrolysis, GTPase activity is stimulated by the 30S ribosomal subunit. In Neisseria meningitidis serogroup B (strain ATCC BAA-335 / MC58), this protein is Small ribosomal subunit biogenesis GTPase RsgA.